The following is a 77-amino-acid chain: U8-lycotoxin-Ls1s (77 aa).

The N-terminal stretch at methionine 1–alanine 20 is a signal peptide. Positions glutamine 21–arginine 26 are excised as a propeptide.

This sequence belongs to the neurotoxin 19 (CSTX) family. 08 (U8-Lctx) subfamily. Post-translationally, contains 4 disulfide bonds. Expressed by the venom gland.

It is found in the secreted. In Lycosa singoriensis (Wolf spider), this protein is U8-lycotoxin-Ls1s.